Consider the following 217-residue polypeptide: ATP-dependent Clp protease proteolytic subunit 1 (217 aa).

The tract at residues Met1–Ser24 is disordered. The active-site Nucleophile is the Ser108. The active site involves His133.

This sequence belongs to the peptidase S14 family. In terms of assembly, fourteen ClpP subunits assemble into 2 heptameric rings which stack back to back to give a disk-like structure with a central cavity, resembling the structure of eukaryotic proteasomes.

It localises to the cytoplasm. The catalysed reaction is Hydrolysis of proteins to small peptides in the presence of ATP and magnesium. alpha-casein is the usual test substrate. In the absence of ATP, only oligopeptides shorter than five residues are hydrolyzed (such as succinyl-Leu-Tyr-|-NHMec, and Leu-Tyr-Leu-|-Tyr-Trp, in which cleavage of the -Tyr-|-Leu- and -Tyr-|-Trp bonds also occurs).. In terms of biological role, cleaves peptides in various proteins in a process that requires ATP hydrolysis. Has a chymotrypsin-like activity. Plays a major role in the degradation of misfolded proteins. This Streptomyces avermitilis (strain ATCC 31267 / DSM 46492 / JCM 5070 / NBRC 14893 / NCIMB 12804 / NRRL 8165 / MA-4680) protein is ATP-dependent Clp protease proteolytic subunit 1.